Here is a 243-residue protein sequence, read N- to C-terminus: Pyridoxine 5'-phosphate synthase (243 aa).

Residue Asn9 participates in 3-amino-2-oxopropyl phosphate binding. 11–12 is a binding site for 1-deoxy-D-xylulose 5-phosphate; that stretch reads DH. Arg20 serves as a coordination point for 3-amino-2-oxopropyl phosphate. The Proton acceptor role is filled by His45. 2 residues coordinate 1-deoxy-D-xylulose 5-phosphate: Arg47 and His52. Catalysis depends on Glu72, which acts as the Proton acceptor. A 1-deoxy-D-xylulose 5-phosphate-binding site is contributed by Thr102. His193 (proton donor) is an active-site residue. 3-amino-2-oxopropyl phosphate-binding positions include Gly194 and 215–216; that span reads GH.

Belongs to the PNP synthase family. Homooctamer; tetramer of dimers.

It is found in the cytoplasm. It carries out the reaction 3-amino-2-oxopropyl phosphate + 1-deoxy-D-xylulose 5-phosphate = pyridoxine 5'-phosphate + phosphate + 2 H2O + H(+). Its pathway is cofactor biosynthesis; pyridoxine 5'-phosphate biosynthesis; pyridoxine 5'-phosphate from D-erythrose 4-phosphate: step 5/5. Functionally, catalyzes the complicated ring closure reaction between the two acyclic compounds 1-deoxy-D-xylulose-5-phosphate (DXP) and 3-amino-2-oxopropyl phosphate (1-amino-acetone-3-phosphate or AAP) to form pyridoxine 5'-phosphate (PNP) and inorganic phosphate. The protein is Pyridoxine 5'-phosphate synthase of Shigella sonnei (strain Ss046).